A 94-amino-acid chain; its full sequence is Small ribosomal subunit protein uS19 (94 aa).

It belongs to the universal ribosomal protein uS19 family.

Protein S19 forms a complex with S13 that binds strongly to the 16S ribosomal RNA. The polypeptide is Small ribosomal subunit protein uS19 (Dictyoglomus turgidum (strain DSM 6724 / Z-1310)).